A 336-amino-acid polypeptide reads, in one-letter code: Geranylgeranyl pyrophosphate synthase 6, mitochondrial (336 aa).

The transit peptide at 1 to 22 directs the protein to the mitochondrion; that stretch reads MRPRYSLILSAMRLIRPSNRRL. Residues lysine 80, arginine 83, and histidine 112 each contribute to the isopentenyl diphosphate site. The Mg(2+) site is built by aspartate 119 and aspartate 125. Arginine 130 is a dimethylallyl diphosphate binding site. Position 131 (arginine 131) interacts with isopentenyl diphosphate. Residues lysine 221, threonine 222, glutamine 259, lysine 276, and lysine 286 each contribute to the dimethylallyl diphosphate site.

The protein belongs to the FPP/GGPP synthase family. Monomer. The cofactor is Mg(2+).

Its subcellular location is the mitochondrion. The catalysed reaction is isopentenyl diphosphate + dimethylallyl diphosphate = (2E)-geranyl diphosphate + diphosphate. It catalyses the reaction isopentenyl diphosphate + (2E)-geranyl diphosphate = (2E,6E)-farnesyl diphosphate + diphosphate. The enzyme catalyses isopentenyl diphosphate + (2E,6E)-farnesyl diphosphate = (2E,6E,10E)-geranylgeranyl diphosphate + diphosphate. It functions in the pathway isoprenoid biosynthesis; farnesyl diphosphate biosynthesis; farnesyl diphosphate from geranyl diphosphate and isopentenyl diphosphate: step 1/1. The protein operates within isoprenoid biosynthesis; geranyl diphosphate biosynthesis; geranyl diphosphate from dimethylallyl diphosphate and isopentenyl diphosphate: step 1/1. Its pathway is isoprenoid biosynthesis; geranylgeranyl diphosphate biosynthesis; geranylgeranyl diphosphate from farnesyl diphosphate and isopentenyl diphosphate: step 1/1. Functionally, catalyzes the trans-addition of the three molecules of IPP onto DMAPP to form geranylgeranyl pyrophosphate. This Arabidopsis thaliana (Mouse-ear cress) protein is Geranylgeranyl pyrophosphate synthase 6, mitochondrial.